The primary structure comprises 258 residues: Ferredoxin--NADP reductase (258 aa).

Residues Ser-2–Ser-102 enclose the FAD-binding FR-type domain. Residue Asp-17 coordinates NADP(+). FAD contacts are provided by residues Arg-51 to Ser-54, Phe-67 to Ile-69, Gly-74 to Thr-77, and Thr-117. NADP(+) is bound by residues Val-144–Arg-145, Thr-181–Arg-182, and Arg-190. Ala-254–Lys-258 provides a ligand contact to FAD.

The protein belongs to the ferredoxin--NADP reductase type 1 family. As to quaternary structure, monomer. FAD is required as a cofactor.

The enzyme catalyses 2 reduced [2Fe-2S]-[ferredoxin] + NADP(+) + H(+) = 2 oxidized [2Fe-2S]-[ferredoxin] + NADPH. In terms of biological role, transports electrons between ferredoxin and NADPH. This Azotobacter vinelandii protein is Ferredoxin--NADP reductase.